We begin with the raw amino-acid sequence, 181 residues long: Adenylate kinase (181 aa).

10 to 15 (GAGKGT) serves as a coordination point for ATP. Residues 30-59 (STGDLFRANIGEGTPLGLEAKSYIDAGKLV) form an NMP region. AMP-binding positions include threonine 31, arginine 36, 57–59 (KLV), 85–88 (GFPR), and glutamine 92. The segment at 126-132 (ARGRADD) is LID. Arginine 127 lines the ATP pocket. Residues arginine 129 and arginine 140 each contribute to the AMP site. Residue glycine 166 coordinates ATP.

It belongs to the adenylate kinase family. In terms of assembly, monomer.

The protein localises to the cytoplasm. The catalysed reaction is AMP + ATP = 2 ADP. It participates in purine metabolism; AMP biosynthesis via salvage pathway; AMP from ADP: step 1/1. In terms of biological role, catalyzes the reversible transfer of the terminal phosphate group between ATP and AMP. Plays an important role in cellular energy homeostasis and in adenine nucleotide metabolism. The protein is Adenylate kinase of Corynebacterium aurimucosum (strain ATCC 700975 / DSM 44827 / CIP 107346 / CN-1) (Corynebacterium nigricans).